Here is a 313-residue protein sequence, read N- to C-terminus: Pyrimidine-specific ribonucleoside hydrolase RihB (313 aa).

Catalysis depends on Asp-11, which acts as the Proton acceptor. Ca(2+)-binding residues include Asp-11, Asp-16, and Val-124. Positions 227 and 239 each coordinate substrate. Asp-240 lines the Ca(2+) pocket.

Belongs to the IUNH family. RihB subfamily. As to quaternary structure, homotetramer. It depends on Ca(2+) as a cofactor.

The enzyme catalyses a pyrimidine ribonucleoside + H2O = a pyrimidine nucleobase + D-ribose. Functionally, hydrolyzes cytidine or uridine to ribose and cytosine or uracil, respectively. Has a clear preference for cytidine over uridine. Strictly specific for ribonucleosides. The chain is Pyrimidine-specific ribonucleoside hydrolase RihB from Shigella sonnei (strain Ss046).